Here is an 835-residue protein sequence, read N- to C-terminus: uncharacterized protein (835 aa).

This is an uncharacterized protein from Mycoplasma genitalium (strain ATCC 33530 / DSM 19775 / NCTC 10195 / G37) (Mycoplasmoides genitalium).